The following is a 141-amino-acid chain: Putative nickel-responsive regulator (141 aa).

Ni(2+) is bound by residues histidine 80, histidine 91, histidine 93, and cysteine 99.

It belongs to the transcriptional regulatory CopG/NikR family. It depends on Ni(2+) as a cofactor.

In terms of biological role, transcriptional regulator. This chain is Putative nickel-responsive regulator, found in Methanococcus maripaludis (strain C5 / ATCC BAA-1333).